The following is a 254-amino-acid chain: Serine acetyltransferase (254 aa).

It belongs to the transferase hexapeptide repeat family.

The protein resides in the cytoplasm. It carries out the reaction L-serine + acetyl-CoA = O-acetyl-L-serine + CoA. Its pathway is amino-acid biosynthesis; L-cysteine biosynthesis; L-cysteine from L-serine: step 1/2. This chain is Serine acetyltransferase (cysE), found in Buchnera aphidicola subsp. Baizongia pistaciae (strain Bp).